Here is a 595-residue protein sequence, read N- to C-terminus: Alpha-1,3-galactosidase B (595 aa).

The N-terminal stretch at Met-1–Ala-22 is a signal peptide. PbH1 repeat units lie at residues Thr-432–Thr-454, Pro-455–Gly-477, and Cys-488–Asp-541.

It belongs to the glycosyl hydrolase 110 family. B subfamily.

It catalyses the reaction Hydrolysis of terminal, non-reducing branched (1-&gt;3)-alpha-D-galactosidic residues, producing free D-galactose.. The enzyme catalyses Hydrolysis of terminal, non-reducing linear (1-&gt;3)-alpha-D-galactosidic residues, producing free D-galactose.. The catalysed reaction is Hydrolysis of terminal, non-reducing alpha-D-galactose residues in alpha-D-galactosides, including galactose oligosaccharides, galactomannans and galactolipids.. In terms of biological role, alpha-galactosidase. Removes both branched alpha-1,3-linked galactose residues of blood group B antigens and linear alpha-1,3-linked galactose structures. This Bacteroides fragilis (strain ATCC 25285 / DSM 2151 / CCUG 4856 / JCM 11019 / LMG 10263 / NCTC 9343 / Onslow / VPI 2553 / EN-2) protein is Alpha-1,3-galactosidase B (glaB).